The chain runs to 181 residues: Adenine phosphoribosyltransferase (181 aa).

Belongs to the purine/pyrimidine phosphoribosyltransferase family. Homodimer.

It localises to the cytoplasm. It catalyses the reaction AMP + diphosphate = 5-phospho-alpha-D-ribose 1-diphosphate + adenine. It participates in purine metabolism; AMP biosynthesis via salvage pathway; AMP from adenine: step 1/1. Its function is as follows. Catalyzes a salvage reaction resulting in the formation of AMP, that is energically less costly than de novo synthesis. The protein is Adenine phosphoribosyltransferase of Mesorhizobium japonicum (strain LMG 29417 / CECT 9101 / MAFF 303099) (Mesorhizobium loti (strain MAFF 303099)).